Here is a 550-residue protein sequence, read N- to C-terminus: MDSPTTQRPNMEIGRAFVNYHPSIWGEHFIAASPDVMRLDAHKGRGEELKEVVRNMFSTVNDPLLKMNLIDAIQRLGVAYHFEMEIDKALGQMYDDHINGKDDGFDLQTLALQFRLLRQQGYNVSSGVFAKFKDDEGNFSSILSKDTHGLLSLYEAAFLGTHGDDILDEAITFTTVHLKSTLPHVSAPLTKLVELALEIPLHRRMERLQTRFYISIYEEDRERNDVLLEFSKLEFLRLQSLHQRELRDISLWWKEMDLLAKLPFTRDRVLEGYFWTVGVYFEPHYSRARMIMTKMIAFATVMDDTYDVYGTLEELELLTATIERWNRGDMDQLPDYMKVIFIALLDGVDATEDDLTGEGKSYRIYYLKEAVKDLAKAYLAEARWVSSGYVPTSEEYMKVALISAVYPMLFVAFLIGMDEVVTKEVLEWAIHMPTMLRTCSIVARLMDDIPSNKLEQERKHVSSSVECYMKEHGTSYHESIQKLREMVASGWKDINKECLKPTPVPTAVINVILNFTRVLEIIYQHRDGYTDASVETKEHIASLFVDPIPL.

D303, D307, D447, and E455 together coordinate Mg(2+). The DDXXD motif motif lies at 303–307 (DDTYD).

It belongs to the terpene synthase family. Tpsa subfamily. The cofactor is Mg(2+). As to expression, expressed in young developing leaves and in stamens. Not detected in tepals and carpels.

It catalyses the reaction (2E,6E)-farnesyl diphosphate = beta-cubebene + diphosphate. It participates in secondary metabolite biosynthesis; terpenoid biosynthesis. Sesquiterpene synthase converting farnesyl diphosphate into beta-cubebene (24.5%), alpha-muurolene (19.3%), delta-cadinol (18.6%), delta-elemene (16.0%), tau-muurolene (10.8%), and beta-elemene (10.8%). No activity with geranyl diphosphate or geranylgeranyl diphosphate. This chain is Beta-cubebene synthase, found in Magnolia grandiflora (Southern magnolia).